We begin with the raw amino-acid sequence, 1004 residues long: Cadmium/zinc-transporting ATPase HMA3 (1004 aa).

The HMA domain maps to 42 to 108 (KKTYLDVLGV…ALNKAGLEAS (67 aa)). 8 helical membrane-spanning segments follow: residues 120-140 (RWPS…FFEW), 144-164 (PLQC…VRRG), 171-191 (LSLD…CLGD), 193-213 (TEAG…TLAC), 340-360 (CAKY…LIPA), 371-391 (WKLA…LSTP), 683-703 (IAVN…LAAA), and 707-727 (VLWA…LNSM). A disordered region spans residues 931–952 (TGCGASKRSPPAEGSCSGGEGG).

The protein belongs to the cation transport ATPase (P-type) (TC 3.A.3) family. Type IB subfamily. In terms of tissue distribution, specifically expressed in roots.

It localises to the vacuole membrane. It carries out the reaction Zn(2+)(in) + ATP + H2O = Zn(2+)(out) + ADP + phosphate + H(+). The enzyme catalyses Cd(2+)(in) + ATP + H2O = Cd(2+)(out) + ADP + phosphate + H(+). Root-specific cadmium (Cd) transporter that mediates Cd efflux in root vacuoles. Involved in Cd detoxification by sequestrating Cd into root vacuoles and limiting translocation of Cd from the roots to the shoots, and accumulation in grains. The sequence is that of Cadmium/zinc-transporting ATPase HMA3 from Oryza sativa subsp. japonica (Rice).